Consider the following 309-residue polypeptide: uncharacterized protein (309 aa).

Positions 1–32 (MTGTAPVSRRQYLGTAGAIIGTTAGCLTGADA) form a signal peptide, tat-type signal.

Belongs to the bacterial solute-binding protein 1 family. WtpA subfamily. Predicted to be exported by the Tat system. The position of the signal peptide cleavage has not been experimentally proven.

This is an uncharacterized protein from Halobacterium salinarum (strain ATCC 700922 / JCM 11081 / NRC-1) (Halobacterium halobium).